Here is a 71-residue protein sequence, read N- to C-terminus: Protein SlyX homolog (71 aa).

It belongs to the SlyX family.

This Stutzerimonas stutzeri (strain A1501) (Pseudomonas stutzeri) protein is Protein SlyX homolog.